A 309-amino-acid polypeptide reads, in one-letter code: MHIPVMLNEVIKSIKIIPNGTYIDATFGCGGHSRCILSKLNEKGKLIVIDRDPKSIEFACSIKDRRLIPIHGNFSKILKYSIKYKIFGKVQGILFDLGLSFSQIKDSNRGFSFMHDGPLDMRMNNLHGISAKEWINNANIKDISFVIKEFGEEKFYKKISNVICKYRKIKNINTTKELVNLINKACGYFYKKKHPARRSFQAIRIYINNELQELKLALNDIIKIISPKGRIVFISFHSLEDRIIKKFIINNSRKKIYPYKLPILESKIKNDNIYKLKYFKKIQPSKKEILYNKKSRSAILRFAEKLKYD.

S-adenosyl-L-methionine contacts are provided by residues 30 to 32 (GGH), Asp50, Phe74, Asp96, and Gln103.

Belongs to the methyltransferase superfamily. RsmH family.

The protein resides in the cytoplasm. The catalysed reaction is cytidine(1402) in 16S rRNA + S-adenosyl-L-methionine = N(4)-methylcytidine(1402) in 16S rRNA + S-adenosyl-L-homocysteine + H(+). Its function is as follows. Specifically methylates the N4 position of cytidine in position 1402 (C1402) of 16S rRNA. The protein is Ribosomal RNA small subunit methyltransferase H of Wigglesworthia glossinidia brevipalpis.